The sequence spans 166 residues: Cyclic pyranopterin monophosphate synthase (166 aa).

Residues 83–85 (LCH) and 121–122 (ME) contribute to the substrate site. Asp-136 is a catalytic residue.

It belongs to the MoaC family. As to quaternary structure, homohexamer; trimer of dimers.

It carries out the reaction (8S)-3',8-cyclo-7,8-dihydroguanosine 5'-triphosphate = cyclic pyranopterin phosphate + diphosphate. Its pathway is cofactor biosynthesis; molybdopterin biosynthesis. In terms of biological role, catalyzes the conversion of (8S)-3',8-cyclo-7,8-dihydroguanosine 5'-triphosphate to cyclic pyranopterin monophosphate (cPMP). The polypeptide is Cyclic pyranopterin monophosphate synthase (Syntrophobacter fumaroxidans (strain DSM 10017 / MPOB)).